The chain runs to 175 residues: MNCPYCSHPDSKVIDSRDVDDGVRRRRECVVCGQRFTTYERFQPAGLFVVKKDQRREEFNKEKLLSGLRRACEKRPLPAGAVDKVAGDIEAELYNMGKAEIPSTLLGDMVMERLKMLDNIAYVRFASVYREFTDITQLKKVVDNLVNGQDEGIYKGQLSLLPEDKAVPKTRYQRR.

The segment at 3–32 (CPYCSHPDSKVIDSRDVDDGVRRRRECVVC) is a zinc-finger region. One can recognise an ATP-cone domain in the interval 47–137 (LFVVKKDQRR…VYREFTDITQ (91 aa)).

The protein belongs to the NrdR family. The cofactor is Zn(2+).

Its function is as follows. Negatively regulates transcription of bacterial ribonucleotide reductase nrd genes and operons by binding to NrdR-boxes. In Dehalococcoides mccartyi (strain CBDB1), this protein is Transcriptional repressor NrdR.